The following is a 156-amino-acid chain: Small ribosomal subunit protein uS7 (156 aa).

It belongs to the universal ribosomal protein uS7 family. Part of the 30S ribosomal subunit. Contacts proteins S9 and S11.

In terms of biological role, one of the primary rRNA binding proteins, it binds directly to 16S rRNA where it nucleates assembly of the head domain of the 30S subunit. Is located at the subunit interface close to the decoding center, probably blocks exit of the E-site tRNA. This Salmonella choleraesuis (strain SC-B67) protein is Small ribosomal subunit protein uS7.